Consider the following 418-residue polypeptide: Serine hydroxymethyltransferase (418 aa).

(6S)-5,6,7,8-tetrahydrofolate is bound by residues Leu121 and 125-127; that span reads GHL. The residue at position 230 (Lys230) is an N6-(pyridoxal phosphate)lysine. 355–357 is a binding site for (6S)-5,6,7,8-tetrahydrofolate; the sequence is SPF.

Belongs to the SHMT family. In terms of assembly, homodimer. It depends on pyridoxal 5'-phosphate as a cofactor.

Its subcellular location is the cytoplasm. It carries out the reaction (6R)-5,10-methylene-5,6,7,8-tetrahydrofolate + glycine + H2O = (6S)-5,6,7,8-tetrahydrofolate + L-serine. Its pathway is one-carbon metabolism; tetrahydrofolate interconversion. It participates in amino-acid biosynthesis; glycine biosynthesis; glycine from L-serine: step 1/1. Functionally, catalyzes the reversible interconversion of serine and glycine with tetrahydrofolate (THF) serving as the one-carbon carrier. This reaction serves as the major source of one-carbon groups required for the biosynthesis of purines, thymidylate, methionine, and other important biomolecules. Also exhibits THF-independent aldolase activity toward beta-hydroxyamino acids, producing glycine and aldehydes, via a retro-aldol mechanism. The sequence is that of Serine hydroxymethyltransferase from Streptococcus pyogenes serotype M49 (strain NZ131).